Here is a 492-residue protein sequence, read N- to C-terminus: Catalase isozyme 1 (492 aa).

Catalysis depends on residues H65 and N138. Y348 contributes to the heme binding site.

The protein belongs to the catalase family. As to quaternary structure, homotetramer. Requires heme as cofactor.

It is found in the cytoplasm. It localises to the cytosol. Its subcellular location is the peroxisome matrix. The enzyme catalyses 2 H2O2 = O2 + 2 H2O. Its activity is regulated as follows. Inhibited by salicylic acid. In terms of biological role, catalyzes the degradation of hydrogen peroxide (H(2)O(2)) generated by peroxisomal oxidases to water and oxygen, thereby protecting cells from the toxic effects of hydrogen peroxide. The chain is Catalase isozyme 1 (CAT-1) from Nicotiana tabacum (Common tobacco).